The sequence spans 1954 residues: MRGPVGTEEELPRLFAEEMENEDEMSEEEDGGLEAFDDFFPVEPVSLPKKKKPKKLKENKCKGKRKKKEGSNDELSENEEDLEEKSESEGSDYSPNKKKKKKLKDKKEKKAKRKKKDEDEDDNDDGCLKEPKSSGQLMAEWGLDDVDYLFSEEDYHTLTNYKAFSQFLRPLIAKKNPKIPMSKMMTVLGAKWREFSANNPFKGSSAAAAAAAVAAAVETVTISPPLAVSPPQVPQPVPIRKAKTKEGKGPGVRKKIKGSKDGKKKGKGKKTAGLKFRFGGISNKRKKGSSSEEDEREESDFDSASIHSASVRSECSAALGKKSKRRRKKKRIDDGDGYETDHQDYCEVCQQGGEIILCDTCPRAYHLVCLDPELEKAPEGKWSCPHCEKEGIQWEPKDDDDEEEEGGCEEEEDDHMEFCRVCKDGGELLCCDACPSSYHLHCLNPPLPEIPNGEWLCPRCTCPPLKGKVQRILHWRWTEPPAPFMVGLPGPDVEPSLPPPKPLEGIPEREFFVKWAGLSYWHCSWVKELQLELYHTVMYRNYQRKNDMDEPPPFDYGSGDEDGKSEKRKNKDPLYAKMEERFYRYGIKPEWMMIHRILNHSFDKKGDVHYLIKWKDLPYDQCTWEIDDIDIPYYDNLKQAYWGHRELMLGEDTRLPKRLLKKGKKLRDDKQEKPPDTPIVDPTVKFDKQPWYIDSTGGTLHPYQLEGLNWLRFSWAQGTDTILADEMGLGKTVQTIVFLYSLYKEGHSKGPYLVSAPLSTIINWEREFEMWAPDFYVVTYTGDKESRSVIRENEFSFEDNAIRSGKKVFRMKKEVQIKFHVLLTSYELITIDQAILGSIEWACLVVDEAHRLKNNQSKFFRVLNSYKIDYKLLLTGTPLQNNLEELFHLLNFLTPERFNNLEGFLEEFADISKEDQIKKLHDLLGPHMLRRLKADVFKNMPAKTELIVRVELSQMQKKYYKFILTRNFEALNSKGGGNQVSLLNIMMDLKKCCNHPYLFPVAAVEAPVLPNGSYDGSSLVKSSGKLMLLQKMLKKLRDEGHRVLIFSQMTKMLDLLEDFLEYEGYKYERIDGGITGGLRQEAIDRFNAPGAQQFCFLLSTRAGGLGINLATADTVIIYDSDWNPHNDIQAFSRAHRIGQNKKVMIYRFVTRASVEERITQVAKRKMMLTHLVVRPGLGSKSGSMTKQELDDILKFGTEELFKDDVEGMMSQGQRPVTPIPDVQSSKGGNLAASAKKKHGSTPPGDNKDVEDSSVIHYDDAAISKLLDRNQDATDDTELQNMNEYLSSFKVAQYVVREEDGVEEVEREIIKQEENVDPDYWEKLLRHHYEQQQEDLARNLGKGKRIRKQVNYNDASQEDQEWQDELSDNQSEYSIGSEDEDEDFEERPEGQSGRRQSRRQLKSDRDKPLPPLLARVGGNIEVLGFNARQRKAFLNAIMRWGMPPQDAFNSHWLVRDLRGKSEKEFRAYVSLFMRHLCEPGADGAETFADGVPREGLSRQHVLTRIGVMSLVRKKVQEFEHVNGKYSTPDLIPEGPEGKKSGEVISSDPNTPVPASPAHLLPAPLGLPDKMEAQLGYMDEKDPGAQKPRQPLEVQALPAALDRVESEDKHESPASKERAREERPEETEKAPPSPEQLPREEVLPEKEKILDKLELSLIHSRGDSSELRPDDTKAEEKEPIETQQNGDKEEDDEGKKEDKKGKFKFMFNIADGGFTELHTLWQNEERAAVSSGKIYDIWHRRHDYWLLAGIVTHGYARWQDIQNDPRYMILNEPFKSEVHKGNYLEMKNKFLARRFKLLEQALVIEEQLRRAAYLNMTQDPNHPAMALNARLAEVECLAESHQHLSKESLAGNKPANAVLHKVLNQLEELLSDMKADVTRLPSMLSRIPPVAARLQMSERSILSRLTNRAGDPTIQQGAFGSSQMYSNNFGPNFRGPGPGGIVNYNQMPLGPYVTDI.

Disordered regions lie at residues 1–134 and 225–338; these read MRGP…PKSS and PLAV…GDGY. Composition is skewed to acidic residues over residues 17–37 and 72–90; these read EEME…EAFD and NDEL…ESEG. Positions 96–115 are enriched in basic residues; the sequence is NKKKKKKLKDKKEKKAKRKK. A compositionally biased stretch (pro residues) spans 227-237; the sequence is AVSPPQVPQPV. Residues 251–272 are compositionally biased toward basic residues; sequence GVRKKIKGSKDGKKKGKGKKTA. A compositionally biased stretch (acidic residues) spans 291 to 301; the sequence is SEEDEREESDF. Over residues 321–330 the composition is skewed to basic residues; that stretch reads KKSKRRRKKK. 2 consecutive PHD-type zinc fingers follow at residues 343–390 and 416–463; these read QDYC…CEKE and MEFC…CTCP. Residues 343–653 are histone-binding; the sequence is QDYCEVCQQG…HRELMLGEDT (311 aa). The region spanning 497–554 is the Chromo 1 domain; the sequence is LPPPKPLEGIPEREFFVKWAGLSYWHCSWVKELQLELYHTVMYRNYQRKNDMDEPPPF. The disordered stretch occupies residues 549–571; sequence DEPPPFDYGSGDEDGKSEKRKNK. Residues 561 to 571 show a composition bias toward basic and acidic residues; the sequence is EDGKSEKRKNK. The Chromo 2 domain maps to 592–653; the sequence is MMIHRILNHS…HRELMLGEDT (62 aa). A Helicase ATP-binding domain is found at 712–896; it reads RFSWAQGTDT…FHLLNFLTPE (185 aa). 725 to 732 contacts ATP; the sequence is DEMGLGKT. The DEAH box motif lies at 847–850; that stretch reads DEAH. Positions 1028–1193 constitute a Helicase C-terminal domain; it reads LLQKMLKKLR…MTKQELDDIL (166 aa). Disordered stretches follow at residues 1209 to 1253, 1351 to 1411, 1524 to 1564, 1597 to 1640, and 1658 to 1696; these read MSQG…EDSS, YNDA…LPPL, YSTP…APLG, AALD…REEV, and SRGD…KKED. Acidic residues-rich tracts occupy residues 1355–1366 and 1376–1385; these read SQEDQEWQDELS and SEDEDEDFEE. Residue Gln1390 is modified to N5-methylglutamine. Position 1554 is a phosphoserine (Ser1554). Residues 1554–1564 show a composition bias toward low complexity; the sequence is SPAHLLPAPLG. Composition is skewed to basic and acidic residues over residues 1600–1627 and 1658–1678; these read DRVE…ETEK and SRGD…KEPI.

This sequence belongs to the SNF2/RAD54 helicase family. Component of the nucleosome remodeling and deacetylase (NuRD) repressor complex, composed of core proteins MTA1, MTA2, MTA3, RBBP4, RBBP7, HDAC1, HDAC2, MBD2, MBD3, and peripherally associated proteins CDK2AP1, CDK2AP2, GATAD2A, GATAD2B, CHD3, CHD4 and CHD5. The exact stoichiometry of the NuRD complex is unknown, and some subunits such as MBD2 and MBD3, GATAD2A and GATAD2B, and CHD3, CHD4 and CHD5 define mutually exclusive NuRD complexes. Interacts with HDAC2. Post-translationally, methylated at Gln-1390 by N6AMT1. Preferentially expressed in total brain, fetal brain, and cerebellum. It is also moderately expressed in the adrenal gland and detected in testis.

It is found in the nucleus. The protein resides in the chromosome. It carries out the reaction ATP + H2O = ADP + phosphate + H(+). Its function is as follows. ATP-dependent chromatin-remodeling factor that binds DNA through histones and regulates gene transcription. May specifically recognize and bind trimethylated 'Lys-27' (H3K27me3) and non-methylated 'Lys-4' of histone H3. Acts as a component of the histone deacetylase NuRD complex which participates in the remodeling of chromatin. Plays a role in the development of the nervous system by activating the expression of genes promoting neuron terminal differentiation. In parallel, it may also positively regulate the trimethylation of histone H3 at 'Lys-27' thereby specifically repressing genes that promote the differentiation into non-neuronal cell lineages. Regulates the expression of genes involved in cell proliferation and differentiation. Downstream activated genes may include CDKN2A that positively regulates the p53/TP53 pathway, which in turn, prevents cell proliferation. In spermatogenesis, it probably regulates histone hyperacetylation and the replacement of histones by transition proteins in chromatin, a crucial step in the condensation of spermatid chromatin and the production of functional spermatozoa. This Homo sapiens (Human) protein is Chromodomain-helicase-DNA-binding protein 5.